The chain runs to 482 residues: MTDPSKNYVNGEWVTSETGETTEVTNPANPSEVVAAYQHSNENDAAAAVDAAVAAEDEWRNTPGPERGRILREAGTLLAQRKDELTEILTAEEGKARPEAAGEVQRAIDIFHYFSSKAADLGGTKKGASGPNTNLYTRQEPVGVAALITPWNYPIAIPAWKLAPALAAGNTVVLKPASIAPGVVIEIARALDEAGLPDGVLNVVTGPGSSVGSEFIGNEGTDLVSFTGSSQVGEMVYEQATDAGKRVQTELGGKNPTLVADSANPAEAADIVANGGFGTTGQSCTACSRAIVHEDVYDDFVAELVDRAESLDVGPGTDHEMGPQVSESELSSTLEYIDIAEAEGATLVAGGGVPEGEAVETGHFVEPTVFTDVDPDMRIAQEEVFGPVVAVIEVSDFDEGLAVANDVDYGLSASIVTDDHTEANRFVDEVEAGVVKVNDKTTGLELHVPFGGFKRSSSETWREQGDAGLDFYTIEKTVYDSY.

The disordered stretch occupies residues 1–28 (MTDPSKNYVNGEWVTSETGETTEVTNPA). Residues 11-25 (GEWVTSETGETTEVT) show a composition bias toward low complexity. The active site involves C284.

It belongs to the aldehyde dehydrogenase family. In terms of assembly, homotetramer.

The catalysed reaction is 2,5-dioxopentanoate + NADP(+) + H2O = 2-oxoglutarate + NADPH + 2 H(+). It participates in carbohydrate metabolism; D-xylose degradation. In terms of biological role, alpha-ketoglutarate semialdehyde dehydrogenase involved in the degradation of D-xylose, a major component of hemicelluloses such as xylan. Catalyzes the fifth reaction in the xylose utilization pathway through dehydratation of alpha-ketoglutarate semialdehyde (2,5-dioxopentanoate) into alpha-ketoglutarate. This chain is Alpha-ketoglutarate semialdehyde dehydrogenase, found in Haloferax volcanii (strain ATCC 29605 / DSM 3757 / JCM 8879 / NBRC 14742 / NCIMB 2012 / VKM B-1768 / DS2) (Halobacterium volcanii).